The primary structure comprises 291 residues: Syntaxin-1A homolog (291 aa).

Residues 1–24 (MTKDRLSALKAAQSEDEQDDDMHM) form a disordered region. Over 1 to 266 (MTKDRLSALK…QYQSKARRKK (266 aa)) the chain is Cytoplasmic. Residues 69–95 (NDQKTKEELDELMAVIKRAANKVRGKL) are a coiled coil. One can recognise a t-SNARE coiled-coil homology domain in the interval 193-255 (LADIEARHND…DRAVADTKKA (63 aa)). The helical; Anchor for type IV membrane protein transmembrane segment at 267 to 287 (ICILVTGVILITGLIIFILFY) threads the bilayer. The Extracellular segment spans residues 288–291 (AKVL).

This sequence belongs to the syntaxin family. In terms of assembly, interacts (via N-terminus, in open or in closed conformation) with unc-18; the interaction is direct. Interaction in open conformation with unc-18 promotes synaptic vesicle docking and tethering. Interaction via N-terminus with unc-18 mediates the secretion of the neurotransmitter acetylcholine from cholinergic motor neurons. Interaction with unc-18 is reduced in the presence of unc-13. As to expression, expressed throughout the head ganglion, nerve ring, ventral cord, dorsal cord, intestine, vulva and spermatheca.

It localises to the cell membrane. The protein localises to the cell projection. The protein resides in the axon. It is found in the dendrite. Its subcellular location is the perikaryon. Functionally, plays a critical role in several secretory processes, including cuticle secretion and neurotransmitter release, and probably assists in neuronal membrane maturation or the final stages of neuronal differentiation. Plays a role in synaptic vesicle docking and tethering through its association with unc-18. Through binding to unc-18 mediates the release of the neurotransmitter acetylcholine from cholinergic motor neurons, and thereby promotes locomotory behaviors. Essential for embryonic viability and development. Has a role in dauer formation and adult life span. Required for locomotion. Probably by regulating neuronal transmission downstream of lin-3 and receptor lin-23 and phospholipase plc-3 and upstream of innexin unc-7 and egl-4/PKG in ALA neurons, involved in the decrease in pharyngeal pumping during the quiescent state that precedes each larval molt. This chain is Syntaxin-1A homolog, found in Caenorhabditis elegans.